The following is a 75-amino-acid chain: Protein CYSTEINE-RICH TRANSMEMBRANE MODULE 5 (75 aa).

Residues 1-29 are disordered; it reads MSQYSQNQYAGAYPTPPVSTGPYVAPPPL. The span at 14 to 29 shows a compositional bias: pro residues; sequence PTPPVSTGPYVAPPPL. Residues 52 to 69 traverse the membrane as a helical segment; the sequence is AADGFLKGCLATMLACCV.

This sequence belongs to the CYSTM1 family. In terms of assembly, heterodimers. Interacts with CYSTM7 and WIH1/CYSTM13. In terms of tissue distribution, mostly expressed in roots, stems, rosette leaves and siliques and, to a lower extent, in flowers and cauline leaves.

The protein resides in the cell membrane. It is found in the nucleus. In terms of biological role, involved in resistance to abiotic stress. This Arabidopsis thaliana (Mouse-ear cress) protein is Protein CYSTEINE-RICH TRANSMEMBRANE MODULE 5.